The following is a 146-amino-acid chain: Large ribosomal subunit protein uL15 (146 aa).

A compositionally biased stretch (basic and acidic residues) spans 1–13; the sequence is MKLHELKPAEGSR. Residues 1-51 are disordered; that stretch reads MKLHELKPAEGSRKVRNRVGRGIGSGNGKTAGKGHKGQNARSGGGVRLGFE. Composition is skewed to gly residues over residues 21 to 31 and 42 to 51; these read RGIGSGNGKTA and SGGGVRLGFE.

It belongs to the universal ribosomal protein uL15 family. In terms of assembly, part of the 50S ribosomal subunit.

Functionally, binds to the 23S rRNA. The sequence is that of Large ribosomal subunit protein uL15 from Bacillus cereus (strain G9842).